Here is a 160-residue protein sequence, read N- to C-terminus: D-aminoacyl-tRNA deacylase 2 (160 aa).

The Gly-transPro motif, allows the protein to recognize chirality of D-amino acids signature appears at 152–153; it reads GP.

Belongs to the DTD family. Homodimer.

The protein resides in the cytoplasm. It catalyses the reaction a D-aminoacyl-tRNA + H2O = a tRNA + a D-alpha-amino acid + H(+). It carries out the reaction glycyl-tRNA(Ala) + H2O = tRNA(Ala) + glycine + H(+). The enzyme catalyses D-tyrosyl-tRNA(Tyr) + H2O = D-tyrosine + tRNA(Tyr). The catalysed reaction is L-alanyl-tRNA(Thr) + H2O = tRNA(Thr) + L-alanine + H(+). Functionally, deacylates mischarged D-aminoacyl-tRNAs. Also deacylates mischarged glycyl-tRNA(Ala), protecting cells against glycine mischarging by AlaRS. Probably acts by rejecting L-amino acids from its binding site rather than specific recognition of D-amino acids. Catalyzes the hydrolysis of D-tyrosyl-tRNA(Tyr), has no activity on correctly charged L-tyrosyl-tRNA(Tyr). By recycling D-aminoacyl-tRNA to D-amino acids and free tRNA molecules, this enzyme counteracts the toxicity associated with the formation of D-aminoacyl-tRNA entities in vivo and helps enforce protein L-homochirality. In contrast to DTD1, deacylates L-Ala mischarged on tRNA(Thr)(G4.U69) by alanine-tRNA ligase AARS. Can deacylate L-Ala due to a relaxed specificity for substrate chirality caused by the trans conformation of the Gly-Pro motif in the active site. Also hydrolyzes correctly charged, achiral, glycyl-tRNA(Gly) in vitro, although in vivo eef1a1a/EF-Tu may protect cognate achiral glycyl-tRNA(Gly) from DTD2-mediated deacetylation. This chain is D-aminoacyl-tRNA deacylase 2 (dtd2), found in Danio rerio (Zebrafish).